The primary structure comprises 179 residues: Adenine phosphoribosyltransferase (179 aa).

The protein belongs to the purine/pyrimidine phosphoribosyltransferase family. Homodimer.

The protein localises to the cytoplasm. It catalyses the reaction AMP + diphosphate = 5-phospho-alpha-D-ribose 1-diphosphate + adenine. It participates in purine metabolism; AMP biosynthesis via salvage pathway; AMP from adenine: step 1/1. Catalyzes a salvage reaction resulting in the formation of AMP, that is energically less costly than de novo synthesis. In Azorhizobium caulinodans (strain ATCC 43989 / DSM 5975 / JCM 20966 / LMG 6465 / NBRC 14845 / NCIMB 13405 / ORS 571), this protein is Adenine phosphoribosyltransferase.